The primary structure comprises 96 residues: MSRISIEQVKHVADLARLAITDEEAEMFTKQLDAIITFAEQLNELDTENVPPTSHVLDMRNVMREDIPEPGLPREEVLKNAPDQQDGQFRVPAILE.

This sequence belongs to the GatC family. As to quaternary structure, heterotrimer of A, B and C subunits.

The enzyme catalyses L-glutamyl-tRNA(Gln) + L-glutamine + ATP + H2O = L-glutaminyl-tRNA(Gln) + L-glutamate + ADP + phosphate + H(+). The catalysed reaction is L-aspartyl-tRNA(Asn) + L-glutamine + ATP + H2O = L-asparaginyl-tRNA(Asn) + L-glutamate + ADP + phosphate + 2 H(+). Its function is as follows. Allows the formation of correctly charged Asn-tRNA(Asn) or Gln-tRNA(Gln) through the transamidation of misacylated Asp-tRNA(Asn) or Glu-tRNA(Gln) in organisms which lack either or both of asparaginyl-tRNA or glutaminyl-tRNA synthetases. The reaction takes place in the presence of glutamine and ATP through an activated phospho-Asp-tRNA(Asn) or phospho-Glu-tRNA(Gln). This is Aspartyl/glutamyl-tRNA(Asn/Gln) amidotransferase subunit C from Geobacillus kaustophilus (strain HTA426).